We begin with the raw amino-acid sequence, 174 residues long: Large ribosomal subunit protein uL10 (174 aa).

It belongs to the universal ribosomal protein uL10 family. As to quaternary structure, part of the ribosomal stalk of the 50S ribosomal subunit. The N-terminus interacts with L11 and the large rRNA to form the base of the stalk. The C-terminus forms an elongated spine to which L12 dimers bind in a sequential fashion forming a multimeric L10(L12)X complex.

In terms of biological role, forms part of the ribosomal stalk, playing a central role in the interaction of the ribosome with GTP-bound translation factors. This Bordetella petrii (strain ATCC BAA-461 / DSM 12804 / CCUG 43448) protein is Large ribosomal subunit protein uL10.